Here is a 205-residue protein sequence, read N- to C-terminus: tRNA 2-(methylsulfanyl)-N(6)-isopentenyladenosine(37) hydroxylase (205 aa).

Fe cation contacts are provided by Glu-38, Glu-69, His-72, Glu-122, Glu-151, and His-154.

This sequence belongs to the MiaE family. In terms of assembly, homodimer. It depends on Fe cation as a cofactor.

It catalyses the reaction 2-methylsulfanyl-N(6)-dimethylallyladenosine(37) in tRNA + AH2 + O2 = N(6)-[(2E)-4-hydroxy-3-methylbut-2-en-1-yl]-2-(methylsulfanyl)adenosine(37) in tRNA + A + H2O. It functions in the pathway tRNA modification; 2-methylthio-N-6-(cis-hydroxy)isopentenyl adenosine-tRNA biosynthesis. Functionally, involved in specific tRNA modification. Catalyzes the oxygen-dependent hydroxylation of 2-methylthio-N-6-isopentenyl adenosine (ms2i6A) to produce 2-methylthio-N-6-(cis-hydroxy)isopentenyl adenosine (ms2io6A) at position 37 in tRNAs. The polypeptide is tRNA 2-(methylsulfanyl)-N(6)-isopentenyladenosine(37) hydroxylase (Pseudomonas putida (strain ATCC 47054 / DSM 6125 / CFBP 8728 / NCIMB 11950 / KT2440)).